The following is a 340-amino-acid chain: Erlin-2 (340 aa).

The Cytoplasmic segment spans residues 1 to 3; it reads MAQ. The chain crosses the membrane as a helical span at residues 4 to 24; it reads LGAVVAVASSFFCASLFSAVH. Over 25 to 340 the chain is Lumenal; sequence KIEEGHIGVY…EPLEAPTKEN (316 aa). N-linked (GlcNAc...) asparagine glycosylation is present at asparagine 106. The interval 177 to 309 is interaction with ERLIN1; the sequence is EAIRRNYELM…DIPNMFMDSA (133 aa). The residue at position 267 (lysine 267) is an N6-acetyllysine.

It belongs to the band 7/mec-2 family. As to quaternary structure, forms a heteromeric complex with ERLIN1. In complex with ERLIN1, interacts with RNF170. Interacts with activated ITPR1, independently of the degree of ITPR1 polyubiquitination. Interacts with SCAP, INSIG1, SREBF1 and SREBF2 under cholesterol sufficiency conditions; indicative for an association with the SCAP-SREBP-INSIG complex. Probably part of an AMFR/gp78 and INSIG1-containing ubiquitin ligase complex involved in ERAD of HMGCR. Interacts with TMUB1; TMUB1 bridges the association with AMFR. Interacts with SYVN1 and RNF139. Interacts with TMEM259. Interacts with TMEM41B. In terms of processing, deubiquitinated by USP25; leading to stabilization.

It is found in the endoplasmic reticulum membrane. Functionally, component of the ERLIN1/ERLIN2 complex which mediates the endoplasmic reticulum-associated degradation (ERAD) of inositol 1,4,5-trisphosphate receptors (IP3Rs) such as ITPR1. Promotes sterol-accelerated ERAD of HMGCR probably implicating an AMFR/gp78-containing ubiquitin ligase complex. Involved in regulation of cellular cholesterol homeostasis by regulation the SREBP signaling pathway. May promote ER retention of the SCAP-SREBF complex. The sequence is that of Erlin-2 (Erlin2) from Mus musculus (Mouse).